The sequence spans 120 residues: NAD(P)H-quinone oxidoreductase subunit 3 (120 aa).

Helical transmembrane passes span 10–30 (FLGF…TNLI), 64–84 (MFAL…PWAV), and 89–109 (LGLL…IALA).

Belongs to the complex I subunit 3 family. NDH-1 can be composed of about 15 different subunits; different subcomplexes with different compositions have been identified which probably have different functions.

The protein resides in the cellular thylakoid membrane. It carries out the reaction a plastoquinone + NADH + (n+1) H(+)(in) = a plastoquinol + NAD(+) + n H(+)(out). It catalyses the reaction a plastoquinone + NADPH + (n+1) H(+)(in) = a plastoquinol + NADP(+) + n H(+)(out). Its function is as follows. NDH-1 shuttles electrons from an unknown electron donor, via FMN and iron-sulfur (Fe-S) centers, to quinones in the respiratory and/or the photosynthetic chain. The immediate electron acceptor for the enzyme in this species is believed to be plastoquinone. Couples the redox reaction to proton translocation, and thus conserves the redox energy in a proton gradient. Cyanobacterial NDH-1 also plays a role in inorganic carbon-concentration. This chain is NAD(P)H-quinone oxidoreductase subunit 3, found in Prochlorococcus marinus (strain MIT 9515).